The following is a 338-amino-acid chain: Holliday junction branch migration complex subunit RuvB (338 aa).

Residues 1–179 (MTDLTTPIRT…FGIPVRLNFY (179 aa)) are large ATPase domain (RuvB-L). The ATP site is built by Leu18, Arg19, Gly60, Lys63, Thr64, Thr65, Arg169, Tyr179, and Arg216. Position 64 (Thr64) interacts with Mg(2+). Positions 180–250 (THAELEQVIG…AADAALNRLE (71 aa)) are small ATPAse domain (RuvB-S). Positions 253–338 (ALGLDAMDRR…AGSQDGLFDK (86 aa)) are head domain (RuvB-H). The DNA site is built by Arg289, Arg308, and Arg313.

This sequence belongs to the RuvB family. In terms of assembly, homohexamer. Forms an RuvA(8)-RuvB(12)-Holliday junction (HJ) complex. HJ DNA is sandwiched between 2 RuvA tetramers; dsDNA enters through RuvA and exits via RuvB. An RuvB hexamer assembles on each DNA strand where it exits the tetramer. Each RuvB hexamer is contacted by two RuvA subunits (via domain III) on 2 adjacent RuvB subunits; this complex drives branch migration. In the full resolvosome a probable DNA-RuvA(4)-RuvB(12)-RuvC(2) complex forms which resolves the HJ.

The protein localises to the cytoplasm. The enzyme catalyses ATP + H2O = ADP + phosphate + H(+). Its function is as follows. The RuvA-RuvB-RuvC complex processes Holliday junction (HJ) DNA during genetic recombination and DNA repair, while the RuvA-RuvB complex plays an important role in the rescue of blocked DNA replication forks via replication fork reversal (RFR). RuvA specifically binds to HJ cruciform DNA, conferring on it an open structure. The RuvB hexamer acts as an ATP-dependent pump, pulling dsDNA into and through the RuvAB complex. RuvB forms 2 homohexamers on either side of HJ DNA bound by 1 or 2 RuvA tetramers; 4 subunits per hexamer contact DNA at a time. Coordinated motions by a converter formed by DNA-disengaged RuvB subunits stimulates ATP hydrolysis and nucleotide exchange. Immobilization of the converter enables RuvB to convert the ATP-contained energy into a lever motion, pulling 2 nucleotides of DNA out of the RuvA tetramer per ATP hydrolyzed, thus driving DNA branch migration. The RuvB motors rotate together with the DNA substrate, which together with the progressing nucleotide cycle form the mechanistic basis for DNA recombination by continuous HJ branch migration. Branch migration allows RuvC to scan DNA until it finds its consensus sequence, where it cleaves and resolves cruciform DNA. This chain is Holliday junction branch migration complex subunit RuvB, found in Sphingopyxis alaskensis (strain DSM 13593 / LMG 18877 / RB2256) (Sphingomonas alaskensis).